The chain runs to 187 residues: NADH-quinone oxidoreductase subunit B (187 aa).

[4Fe-4S] cluster-binding residues include C46, C47, C112, and C141.

This sequence belongs to the complex I 20 kDa subunit family. NDH-1 is composed of 14 different subunits. Subunits NuoB, C, D, E, F, and G constitute the peripheral sector of the complex. [4Fe-4S] cluster serves as cofactor.

The protein resides in the cell inner membrane. It carries out the reaction a quinone + NADH + 5 H(+)(in) = a quinol + NAD(+) + 4 H(+)(out). NDH-1 shuttles electrons from NADH, via FMN and iron-sulfur (Fe-S) centers, to quinones in the respiratory chain. The immediate electron acceptor for the enzyme in this species is believed to be ubiquinone. Couples the redox reaction to proton translocation (for every two electrons transferred, four hydrogen ions are translocated across the cytoplasmic membrane), and thus conserves the redox energy in a proton gradient. This chain is NADH-quinone oxidoreductase subunit B, found in Myxococcus xanthus (strain DK1622).